The chain runs to 92 residues: MSGSFDRYVSFKNSNWEVRSERVMARLQKHIDAAENPFWAYFAQKRIELREKQGLDDLRVLHNYLPTLRELLEDNGDLETLAMLEELEVTLM.

The protein belongs to the CowN family.

In terms of biological role, is required to sustain N(2)-dependent growth in the presence of low levels of carbon monoxide (CO). Probably acts by protecting the N(2) fixation ability of the nitrogenase complex, which is inactivated in the presence of CO. In Rhodopseudomonas palustris (strain HaA2), this protein is N(2)-fixation sustaining protein CowN.